The sequence spans 584 residues: Transcription factor COE1 (584 aa).

Position 1 is an N-acetylmethionine (Met-1). The segment covering Met-1 to Ser-14 has biased composition (polar residues). The segment at Met-1–Gly-21 is disordered. A Glycyl lysine isopeptide (Lys-Gly) (interchain with G-Cter in SUMO1); alternate cross-link involves residue Lys-16. Lys-16 is covalently cross-linked (Glycyl lysine isopeptide (Lys-Gly) (interchain with G-Cter in SUMO2); alternate). Residues Arg-63–Asn-66 form an interaction with DNA region. The C5-type zinc finger occupies Cys-151–Cys-170. Interaction with DNA regions lie at residues Asn-197 to Asn-204 and Asn-236 to Lys-239. Residues Pro-255–Thr-338 form the IPT/TIG domain. The segment at Gly-450–Asn-473 is disordered.

It belongs to the COE family. As to quaternary structure, homodimer. Interacts with ZNF423 and ZNF521, leading to prevent EBF1 to bind DNA and activate target genes. Interacts with CCR4-NOT component CNOT3. Expressed exclusively in olfactory receptor neurons and their precursors.

The protein localises to the nucleus. In terms of biological role, key pioneer transcription factor of B-cell specification and commitment. Recognizes variations of the palindromic sequence 5'-ATTCCCNNGGGAATT-3'. Operates in a transcription factor network to activate B-cell-specific genes and repress genes associated with alternative cell fates. For instance, positively regulates many B-cell specific genes including BCR or CD40 while repressing genes that direct cells into alternative lineages, including GATA3 and TCF7 for the T-cell lineage. In addition to its role during lymphopoiesis, controls the thermogenic gene program in adipocytes during development and in response to environmental cold. This is Transcription factor COE1 (Ebf1) from Rattus norvegicus (Rat).